Consider the following 171-residue polypeptide: uncharacterized protein (171 aa).

Residues 1-20 (MRDFYLFLGAVFLLVLGVWA) form the signal peptide.

This is an uncharacterized protein from Aquifex aeolicus (strain VF5).